The primary structure comprises 551 residues: Glucans biosynthesis protein D (551 aa).

Positions 1–32 (MDRRRFIKGSMAMAAVCGTSGIASLFSQAAFA) form a signal peptide, tat-type signal.

It belongs to the OpgD/OpgG family. Post-translationally, predicted to be exported by the Tat system. The position of the signal peptide cleavage has not been experimentally proven.

It is found in the periplasm. It functions in the pathway glycan metabolism; osmoregulated periplasmic glucan (OPG) biosynthesis. Its function is as follows. Probably involved in the control of the structural glucose backbone of osmoregulated periplasmic glucans (OPGs). This chain is Glucans biosynthesis protein D, found in Shigella dysenteriae serotype 1 (strain Sd197).